The primary structure comprises 165 residues: Probable deoxyuridine 5'-triphosphate nucleotidohydrolase (165 aa).

The span at 39 to 49 shows a compositional bias: basic and acidic residues; sequence GRIDTDGKTIG. A disordered region spans residues 39–64; that stretch reads GRIDTDGKTIGDRSPVTPTADEDSTD.

It belongs to the dCTP deaminase family. Archaeal dUTPase subfamily.

The catalysed reaction is dUTP + H2O = dUMP + diphosphate + H(+). It participates in pyrimidine metabolism; dUMP biosynthesis; dUMP from dCTP (dUTP route): step 2/2. Functionally, this enzyme is involved in nucleotide metabolism: it produces dUMP, the immediate precursor of thymidine nucleotides and it decreases the intracellular concentration of dUTP so that uracil cannot be incorporated into DNA. The chain is Probable deoxyuridine 5'-triphosphate nucleotidohydrolase from Halobacterium salinarum (strain ATCC 29341 / DSM 671 / R1).